Reading from the N-terminus, the 466-residue chain is 3-isopropylmalate dehydratase large subunit (466 aa).

Residues Cys347, Cys407, and Cys410 each contribute to the [4Fe-4S] cluster site.

Belongs to the aconitase/IPM isomerase family. LeuC type 1 subfamily. Heterodimer of LeuC and LeuD. Requires [4Fe-4S] cluster as cofactor.

It catalyses the reaction (2R,3S)-3-isopropylmalate = (2S)-2-isopropylmalate. Its pathway is amino-acid biosynthesis; L-leucine biosynthesis; L-leucine from 3-methyl-2-oxobutanoate: step 2/4. In terms of biological role, catalyzes the isomerization between 2-isopropylmalate and 3-isopropylmalate, via the formation of 2-isopropylmaleate. The protein is 3-isopropylmalate dehydratase large subunit of Escherichia coli (strain 55989 / EAEC).